The chain runs to 32 residues: U5-ctenitoxin-Pn1a (32 aa).

3 disulfides stabilise this stretch: cysteine 3/cysteine 16, cysteine 9/cysteine 21, and cysteine 15/cysteine 30.

In terms of tissue distribution, expressed by the venom gland.

It localises to the secreted. In terms of biological role, blocks voltage-gated sodium channels (Nav). Causes tail erection, scratching and a reduction in mobility at a dose level of 1.40 mg/mouse. The protein is U5-ctenitoxin-Pn1a of Phoneutria nigriventer (Brazilian armed spider).